Consider the following 375-residue polypeptide: Protein NDRG3 (375 aa).

Residues 326-375 (RSRTHSASSSGSMEIPRSRSHTSNAQLKSSSNNSLSNQIQETPQTIELSC) are disordered. Low complexity predominate over residues 348 to 363 (SNAQLKSSSNNSLSNQ). Positions 364–375 (IQETPQTIELSC) are enriched in polar residues.

The protein belongs to the NDRG family.

The chain is Protein NDRG3 from Xenopus laevis (African clawed frog).